Here is a 538-residue protein sequence, read N- to C-terminus: Neutral protease B (538 aa).

A signal peptide spans 1–28 (MRNLTKTSLLLAGLCTAAQMVFVTHASA). The propeptide at 29-223 (EESIEYDHTY…VIESFNAIHE (195 aa)) is activation peptide. Asp365 contributes to the Ca(2+) binding site. Zn(2+) is bound at residue His369. Glu370 is an active-site residue. 2 residues coordinate Zn(2+): His373 and Glu393. Residues Asp404, Asp406, Asp407, Glu409, Glu412, Tyr415, Thr416, Ile419, and Asp422 each contribute to the Ca(2+) site. The tract at residues 421–441 (GDSLRSLEDPSKQGNPDHYSN) is disordered. His453 (proton donor) is an active-site residue.

Belongs to the peptidase M4 family. It depends on Zn(2+) as a cofactor.

It localises to the secreted. Protease activity can be inhibited in vitro by either a zinc specific chelator, 1,10-phenanthroline, or a metal chelator, EDTA. The enzyme is resistant to phenylmethylsulfonyl fluoride and iodoacetic acid. Functionally, protease able to cleave casein in vitro. This is Neutral protease B from Bacillus subtilis (strain 168).